A 449-amino-acid chain; its full sequence is UDP-N-acetylmuramoylalanine--D-glutamate ligase (449 aa).

An ATP-binding site is contributed by 118–124; that stretch reads GTNGKTT.

It belongs to the MurCDEF family.

The protein localises to the cytoplasm. The catalysed reaction is UDP-N-acetyl-alpha-D-muramoyl-L-alanine + D-glutamate + ATP = UDP-N-acetyl-alpha-D-muramoyl-L-alanyl-D-glutamate + ADP + phosphate + H(+). The protein operates within cell wall biogenesis; peptidoglycan biosynthesis. Functionally, cell wall formation. Catalyzes the addition of glutamate to the nucleotide precursor UDP-N-acetylmuramoyl-L-alanine (UMA). This chain is UDP-N-acetylmuramoylalanine--D-glutamate ligase, found in Staphylococcus aureus (strain MW2).